A 794-amino-acid chain; its full sequence is Protocadherin beta-6 (794 aa).

The first 27 residues, 1–27, serve as a signal peptide directing secretion; that stretch reads MMQTKVQNKKRQVAFFILLMLWGEVGS. At 28–688 the chain is on the extracellular side; that stretch reads ESIQYSVLEE…AQADSLTVYL (661 aa). Cadherin domains are found at residues 34–132, 137–241, 246–345, 350–449, and 454–559; these read VLEE…APEF, MLLK…VPEF, YEAQ…APEL, FISL…APAF, and YTLF…SPFV. Asn-46 is a glycosylation site (N-linked (GlcNAc...) asparagine). Residues Cys-95 and Cys-101 are joined by a disulfide bond. N-linked (GlcNAc...) asparagine glycosylation is present at Asn-183. N-linked (GlcNAc...) asparagine glycosylation occurs at Asn-416. Residue Asn-565 is glycosylated (N-linked (GlcNAc...) asparagine). Residues 566–669 enclose the Cadherin 6 domain; that stretch reads GSAPCTELVP…LVDGFSQPYL (104 aa). The chain crosses the membrane as a helical span at residues 689 to 709; sequence VVALASVSSLFLFSVLLFVAV. Over 710-794 the chain is Cytoplasmic; that stretch reads RLCRRSRAAS…PTSRNSFPFS (85 aa). A disordered region spans residues 773–794; that stretch reads PPQGTEREMEETPTSRNSFPFS. The segment covering 784–794 has biased composition (polar residues); it reads TPTSRNSFPFS.

As to quaternary structure, forms homodimers in trans (molecules expressed by two different cells). Forms promiscuous heterodimers in cis (at the plasma membrane of the same cell) with other protocadherins.

The protein resides in the cell membrane. Functionally, calcium-dependent cell-adhesion protein involved in cells self-recognition and non-self discrimination. Thereby, it is involved in the establishment and maintenance of specific neuronal connections in the brain. The chain is Protocadherin beta-6 from Homo sapiens (Human).